The chain runs to 37 residues: Somatostatin-37 (37 aa).

A propeptide spanning residues 1-2 (AL) is cleaved from the precursor. Residues C26 and C37 are joined by a disulfide bond.

It belongs to the somatostatin family.

It is found in the secreted. In terms of biological role, somatostatin inhibits the release of somatotropin. In Petromyzon marinus (Sea lamprey), this protein is Somatostatin-37 (sst).